A 589-amino-acid polypeptide reads, in one-letter code: TAF5-like RNA polymerase II p300/CBP-associated factor-associated factor 65 kDa subunit 5L (589 aa).

Residues 211–221 (ASGSSSRSENN) show a composition bias toward polar residues. Residues 211–230 (ASGSSSRSENNGLEPPDMPS) form a disordered region. WD repeat units lie at residues 266–305 (NTEQLLNTAEISPDSKLLAAGFDNSCIKLWSLRSKKLKSE), 340–379 (GHCGPVYSTRFLADSSGLLSCSEDMSIRYWDLGSFTNTVL), 382–421 (GHAYPVWDLDISPYSLYFASGSHDRTARLWSFDRTYPLRI), 424–463 (GHLADVDCVKFHPNSNYLATGSTDKTVRLWSAQQGNSVRL), 466–505 (GHRGPVLSLAFSPNGKYLASAGEDQRLKLWDLASGTLYKE), and 508–547 (GHTDNITSLTFSPDSGLIASASMDNSVRVWDIRNTYCSAP).

This sequence belongs to the WD repeat TAF5 family. As to quaternary structure, the PCAF complex is composed of a number of TBP-associated factors (TAFS), such as TAF5, TAF5L, TAF6, TAF6L, TAF9, TAF10 and TAF12, PCAF, and also PCAF-associated factors (PAFs), such as TADA2L/ADA2, TADA3L/ADA3 and SPT3. Component of the STAGA transcription coactivator-HAT complex, at least composed of SUPT3H, GCN5L2, TAF5L, TAF6L, SUPT7L, TADA3L, TAD1L, TAF10, TAF12, TRRAP and TAF9.

It is found in the nucleus. Its function is as follows. Functions as a component of the PCAF complex. The PCAF complex is capable of efficiently acetylating histones in a nucleosomal context. The PCAF complex could be considered as the human version of the yeast SAGA complex. With TAF6L, acts as an epigenetic regulator essential for somatic reprogramming. Regulates target genes through H3K9ac deposition and MYC recruitment which trigger MYC regulatory network to orchestrate gene expression programs to control embryonic stem cell state. In Homo sapiens (Human), this protein is TAF5-like RNA polymerase II p300/CBP-associated factor-associated factor 65 kDa subunit 5L.